The primary structure comprises 660 residues: Phosphatidylinositol-3-phosphate phosphatase MTMR7 (660 aa).

Residues 126–504 (GWLLVDLSEE…FTYKFWNGMY (379 aa)) form the Myotubularin phosphatase domain. The a 1,2-diacyl-sn-glycero-3-phospho-(1D-myo-inositol-3-phosphate) site is built by Asn250, Asn275, and Ile276. The active-site Phosphocysteine intermediate is the Cys338. The a 1,2-diacyl-sn-glycero-3-phospho-(1D-myo-inositol-3-phosphate) site is built by Ser339, Asp340, Gly341, Trp342, Asp343, Arg344, and Arg384. Positions 514 to 548 (RQSVTDYLMAVKEESQQLEEELESLEERLEKIQKV) form a coiled coil. The tract at residues 550-660 (LHGTKVKSKQ…DSDEAVFLTA (111 aa)) is disordered. Polar residues predominate over residues 566 to 596 (SGFSTSDHSTANTPQDYSGNSKSFPSRSPSQ). The residue at position 578 (Thr578) is a Phosphothreonine. Over residues 641–653 (APSEDSGKDRDSD) the composition is skewed to basic and acidic residues.

The protein belongs to the protein-tyrosine phosphatase family. Non-receptor class myotubularin subfamily. Heterodimer (via C-terminus) with MTMR9 (via coiled coil domain); the interaction enhances MTMR7 catalytic activity. Does not homodimerize. Interacts with RAB1B (in GDP-bound form). Highly expressed in brain (at protein level). Expressed at low levels in liver, kidney and testis.

It is found in the cytoplasm. The protein resides in the endomembrane system. It catalyses the reaction a 1,2-diacyl-sn-glycero-3-phospho-(1D-myo-inositol-3-phosphate) + H2O = a 1,2-diacyl-sn-glycero-3-phospho-(1D-myo-inositol) + phosphate. It carries out the reaction 1D-myo-inositol 1,3-bisphosphate + H2O = 1D-myo-inositol 1-phosphate + phosphate. Its activity is regulated as follows. Interaction with MTMR9 increases phosphatase activity. In terms of biological role, lipid phosphatase that specifically dephosphorylates the D-3 position of phosphatidylinositol 3-phosphate (PtdIns(3)P) and inositol 1,3-bisphosphate (Ins(1,3)P2). This chain is Phosphatidylinositol-3-phosphate phosphatase MTMR7, found in Mus musculus (Mouse).